A 153-amino-acid polypeptide reads, in one-letter code: Large ribosomal subunit protein uL30 (153 aa).

Belongs to the universal ribosomal protein uL30 family. Part of the 50S ribosomal subunit.

This Methanosarcina barkeri (strain Fusaro / DSM 804) protein is Large ribosomal subunit protein uL30.